We begin with the raw amino-acid sequence, 248 residues long: Cytochrome c oxidase subunit 2 (248 aa).

Residues 1–43 (MTNLLNNWLIINQFGYDLPEPWQLGLQDAAHPVMEEIIFFHDQ) lie on the Mitochondrial intermembrane side of the membrane. A helical transmembrane segment spans residues 44–65 (VMFILIIIITTVLWLIVKALSG). Residues 66-79 (KAYHRYLVDGTLLE) are Mitochondrial matrix-facing. The helical transmembrane segment at 80–99 (IIWTIVPAIILILIAFPSLK) threads the bilayer. Over 100 to 248 (LLYLMDEVMD…INWVLSGSDE (149 aa)) the chain is Mitochondrial intermembrane. Cu cation-binding residues include H180, C215, E217, C219, H223, and M226. E217 contacts Mg(2+).

The protein belongs to the cytochrome c oxidase subunit 2 family. As to quaternary structure, component of the cytochrome c oxidase (complex IV, CIV), a multisubunit enzyme composed of a catalytic core of 3 subunits and several supernumerary subunits. The complex exists as a monomer or a dimer and forms supercomplexes (SCs) in the inner mitochondrial membrane with ubiquinol-cytochrome c oxidoreductase (cytochrome b-c1 complex, complex III, CIII). Cu cation is required as a cofactor.

Its subcellular location is the mitochondrion inner membrane. It carries out the reaction 4 Fe(II)-[cytochrome c] + O2 + 8 H(+)(in) = 4 Fe(III)-[cytochrome c] + 2 H2O + 4 H(+)(out). Component of the cytochrome c oxidase, the last enzyme in the mitochondrial electron transport chain which drives oxidative phosphorylation. The respiratory chain contains 3 multisubunit complexes succinate dehydrogenase (complex II, CII), ubiquinol-cytochrome c oxidoreductase (cytochrome b-c1 complex, complex III, CIII) and cytochrome c oxidase (complex IV, CIV), that cooperate to transfer electrons derived from NADH and succinate to molecular oxygen, creating an electrochemical gradient over the inner membrane that drives transmembrane transport and the ATP synthase. Cytochrome c oxidase is the component of the respiratory chain that catalyzes the reduction of oxygen to water. Electrons originating from reduced cytochrome c in the intermembrane space (IMS) are transferred via the dinuclear copper A center (CU(A)) of subunit 2 and heme A of subunit 1 to the active site in subunit 1, a binuclear center (BNC) formed by heme A3 and copper B (CU(B)). The BNC reduces molecular oxygen to 2 water molecules using 4 electrons from cytochrome c in the IMS and 4 protons from the mitochondrial matrix. The chain is Cytochrome c oxidase subunit 2 (COII) from Metridium senile (Brown sea anemone).